Here is a 274-residue protein sequence, read N- to C-terminus: Cytochrome b-c1 complex subunit Rieske, mitochondrial (274 aa).

Over 79 to 103 (SHTDIKVPDFSDYRRPEVLDSTKSS) the chain is Mitochondrial matrix. Residues 104–140 (KESSEARKGFSYLVTATTTVGVAYAAKNVVSQFVSSM) form a helical membrane-spanning segment. Over 141–274 (SASADVLAMS…FTSDDMVIVG (134 aa)) the chain is Mitochondrial intermembrane. In terms of domain architecture, Rieske spans 187–272 (EAAVEVSQLR…YEFTSDDMVI (86 aa)). The [2Fe-2S] cluster site is built by Cys217, His219, Cys236, His239, and Ser241. Cysteines 222 and 238 form a disulfide.

This sequence belongs to the Rieske iron-sulfur protein family. In terms of assembly, component of the ubiquinol-cytochrome c oxidoreductase (cytochrome b-c1 complex, complex III, CIII), a multisubunit enzyme composed of 11 subunits. The complex is composed of 3 respiratory subunits cytochrome b, cytochrome c1 and Rieske protein UQCRFS1, 2 core protein subunits UQCRC1/QCR1 and UQCRC2/QCR2, and 6 low-molecular weight protein subunits UQCRH/QCR6, UQCRB/QCR7, UQCRQ/QCR8, UQCR10/QCR9, UQCR11/QCR10 and subunit 9, the cleavage product of Rieske protein UQCRFS1. The complex exists as an obligatory dimer and forms supercomplexes (SCs) in the inner mitochondrial membrane with NADH-ubiquinone oxidoreductase (complex I, CI) and cytochrome c oxidase (complex IV, CIV), resulting in different assemblies (supercomplex SCI(1)III(2)IV(1) and megacomplex MCI(2)III(2)IV(2)). Incorporation of the Rieske protein UQCRFS1 is the penultimate step in complex III assembly. Interacts with TTC19, which is involved in the clearance of UQCRFS1 fragments. Component of the ubiquinol-cytochrome c oxidoreductase (cytochrome b-c1 complex, complex III, CIII). Subunit 9 corresponds to the mitochondrial targeting sequence (MTS) of Rieske protein UQCRFS1. It is retained after processing and incorporated inside complex III, where it remains bound to the complex and localizes between the 2 core subunits UQCRC1/QCR1 and UQCRC2/QCR2. Requires [2Fe-2S] cluster as cofactor. In terms of processing, proteolytic processing is necessary for the correct insertion of UQCRFS1 in the complex III dimer. Several fragments are generated during UQCRFS1 insertion, most probably due to the endogenous matrix-processing peptidase (MPP) activity of the 2 core protein subunits UQCRC1/QCR1 and UQCRC2/QCR2, which are homologous to the 2 mitochondrial-processing peptidase (MPP) subunits beta-MPP and alpha-MPP respectively. The action of the protease is also necessary for the clearance of the UQCRFS1 fragments.

It localises to the mitochondrion inner membrane. It carries out the reaction a quinol + 2 Fe(III)-[cytochrome c](out) = a quinone + 2 Fe(II)-[cytochrome c](out) + 2 H(+)(out). Component of the ubiquinol-cytochrome c oxidoreductase, a multisubunit transmembrane complex that is part of the mitochondrial electron transport chain which drives oxidative phosphorylation. The respiratory chain contains 3 multisubunit complexes succinate dehydrogenase (complex II, CII), ubiquinol-cytochrome c oxidoreductase (cytochrome b-c1 complex, complex III, CIII) and cytochrome c oxidase (complex IV, CIV), that cooperate to transfer electrons derived from NADH and succinate to molecular oxygen, creating an electrochemical gradient over the inner membrane that drives transmembrane transport and the ATP synthase. The cytochrome b-c1 complex catalyzes electron transfer from ubiquinol to cytochrome c, linking this redox reaction to translocation of protons across the mitochondrial inner membrane, with protons being carried across the membrane as hydrogens on the quinol. In the process called Q cycle, 2 protons are consumed from the matrix, 4 protons are released into the intermembrane space and 2 electrons are passed to cytochrome c. The Rieske protein is a catalytic core subunit containing a [2Fe-2S] iron-sulfur cluster. It cycles between 2 conformational states during catalysis to transfer electrons from the quinol bound in the Q(0) site in cytochrome b to cytochrome c1. Incorporation of UQCRFS1 is the penultimate step in complex III assembly. In terms of biological role, component of the ubiquinol-cytochrome c oxidoreductase (cytochrome b-c1 complex, complex III, CIII). UQCRFS1 undergoes proteolytic processing once it is incorporated in the complex III dimer. One of the fragments, called subunit 9, corresponds to its mitochondrial targeting sequence (MTS). The proteolytic processing is necessary for the correct insertion of UQCRFS1 in the complex III dimer, but the persistence of UQCRFS1-derived fragments may prevent newly imported UQCRFS1 to be processed and assembled into complex III and is detrimental for the complex III structure and function. This Bos taurus (Bovine) protein is Cytochrome b-c1 complex subunit Rieske, mitochondrial (UQCRFS1).